The chain runs to 570 residues: Sulfite reductase [NADPH] hemoprotein beta-component (570 aa).

[4Fe-4S] cluster contacts are provided by Cys434, Cys440, Cys479, and Cys483. Residue Cys483 participates in siroheme binding.

This sequence belongs to the nitrite and sulfite reductase 4Fe-4S domain family. Alpha(8)-beta(8). The alpha component is a flavoprotein, the beta component is a hemoprotein. It depends on siroheme as a cofactor. Requires [4Fe-4S] cluster as cofactor.

It carries out the reaction hydrogen sulfide + 3 NADP(+) + 3 H2O = sulfite + 3 NADPH + 4 H(+). The protein operates within sulfur metabolism; hydrogen sulfide biosynthesis; hydrogen sulfide from sulfite (NADPH route): step 1/1. Component of the sulfite reductase complex that catalyzes the 6-electron reduction of sulfite to sulfide. This is one of several activities required for the biosynthesis of L-cysteine from sulfate. In Shigella flexneri serotype 5b (strain 8401), this protein is Sulfite reductase [NADPH] hemoprotein beta-component.